Consider the following 187-residue polypeptide: MREHAAWQPQAAAWRPGVAVVPGRPAPAVQRLLTERGSLTARLERLGPVRVHVLREAWQRPAPDEGVALELPVGRHAWLREVVLDCEGGPTIYARSIVPDRLLGPLARLPRLGERPLGRLLFSAADVQRGPLAVARLRGREPLVRWLRGHGLPSPAGGWARRSTLSVAGRRLLVTEVFFPEGVEGER.

Substrate contacts are provided by arginine 80, leucine 117, and glutamate 176.

This sequence belongs to the UbiC family.

It is found in the cytoplasm. It catalyses the reaction chorismate = 4-hydroxybenzoate + pyruvate. It participates in cofactor biosynthesis; ubiquinone biosynthesis. Functionally, removes the pyruvyl group from chorismate, with concomitant aromatization of the ring, to provide 4-hydroxybenzoate (4HB) for the ubiquinone pathway. This chain is Probable chorismate pyruvate-lyase, found in Halorhodospira halophila (strain DSM 244 / SL1) (Ectothiorhodospira halophila (strain DSM 244 / SL1)).